The following is a 90-amino-acid chain: Putative UPF0401 protein YpjI (90 aa).

Belongs to the UPF0401 family.

In Escherichia coli (strain K12), this protein is Putative UPF0401 protein YpjI (ypjI).